We begin with the raw amino-acid sequence, 1642 residues long: Cortactin-binding protein 2 (1642 aa).

Disordered stretches follow at residues 1–27 (MATD…AEAA), 203–222 (KKKT…RSTE), 366–433 (IGAS…HPGL), 446–471 (GSNA…SPTS), and 491–611 (RFTS…PSID). The stretch at 119–276 (RKMQERMSTQ…EQLKRGTDSK (158 aa)) forms a coiled coil. A compositionally biased stretch (polar residues) spans 385 to 394 (GPSTGSTADL). The span at 395–407 (TSSPTPVPSTVSP) shows a compositional bias: low complexity. At Arg-491 the chain carries Asymmetric dimethylarginine. A compositionally biased stretch (pro residues) spans 497–506 (AGAPPRPGAP). Positions 576-586 (TVASPPSTLPQ) are enriched in polar residues. ANK repeat units follow at residues 702–732 (GRPT…DINY), 736–765 (DGHS…QVNA), 769–798 (NGFT…NINH), 802–831 (GGQT…DRSV), 835–864 (DGWT…PAHG), and 904–934 (EGWT…EPER). The interval 1441 to 1469 (SGAWRKVSTSPRKKSGRFSSPTWNKPDLS) is disordered. Residue Ser-1513 is modified to Phosphoserine. Residues 1545-1642 (LRRFDSSGNN…NSRDLEPTQK (98 aa)) are disordered. Composition is skewed to polar residues over residues 1552–1563 (GNNPVFSATVNN) and 1571–1588 (KEVS…SNSK). Residues 1613-1627 (SQNTKRSSSSSNTRQ) are compositionally biased toward low complexity.

Interacts with CTTN/cortactin SH3 domain. Interacts with STRN, STRN4/zinedin and MOB4/phocein; this interactions mediate the association with the STRIPAK core complex and may regulate dendritic spine distribution of the STRIPAK complex in hippocampal neurons. Activation of glutamate receptors weakens the interaction with STRN and STRN4.

The protein resides in the cytoplasm. It localises to the cell cortex. The protein localises to the cell projection. Its subcellular location is the dendritic spine. In terms of biological role, regulates the dendritic spine distribution of CTTN/cortactin in hippocampal neurons, and thus controls dendritic spinogenesis and dendritic spine maintenance. Associates with the striatin-interacting phosphatase and kinase (STRIPAK) core complex to regulate dendritic spine distribution of the STRIPAK complex in hippocampal neurons. This Muntiacus muntjak (Barking deer) protein is Cortactin-binding protein 2 (CTTNBP2).